Consider the following 436-residue polypeptide: MTVYHFVGIKGTGMSSLAQILHDMKHTVQGSDYEKRFFTQTALEKRSISILPFDKNNVEEGQVIIAGNAFPDTHEEIVAAKELNIPVHRYHHFLGDLMSQYTSVAVTGAHGKTSTTGLLAHVMQGAHPTSYLIGDGTGHGVENSKYFVFEACEYRRHFLSYNPDYAIMTNIDFDHPDYFADINDVFSAFQEMALQVKKGIIACGDDEELQKIQAKVPVIFYGFGEDNDFQARNIQKRTDGTIFDVFVRNTYYDTFKITGYGNHSVLNALAVIALCHYENVDVEAVKHQLTTFEGVKRRFNEKPMGEQVIIDDYAHHPTEINATIEAARQKHPEREIVAVFQPHTFSRTEKFLDEFAESLSKADQVYLCDIFGSARENKGELTIEDLQKRIDGAELITDTTTDVLKKHKNGVLIFMGAGDIQKFEAAYVKEVQVAEK.

108–114 (GAHGKTS) contributes to the ATP binding site.

It belongs to the MurCDEF family.

It localises to the cytoplasm. The enzyme catalyses UDP-N-acetyl-alpha-D-muramate + L-alanine + ATP = UDP-N-acetyl-alpha-D-muramoyl-L-alanine + ADP + phosphate + H(+). The protein operates within cell wall biogenesis; peptidoglycan biosynthesis. Cell wall formation. In Bacillus cereus (strain B4264), this protein is UDP-N-acetylmuramate--L-alanine ligase.